Consider the following 340-residue polypeptide: Heat-inducible transcription repressor HrcA (340 aa).

The protein belongs to the HrcA family.

In terms of biological role, negative regulator of class I heat shock genes (grpE-dnaK-dnaJ and groELS operons). Prevents heat-shock induction of these operons. This chain is Heat-inducible transcription repressor HrcA, found in Burkholderia cenocepacia (strain ATCC BAA-245 / DSM 16553 / LMG 16656 / NCTC 13227 / J2315 / CF5610) (Burkholderia cepacia (strain J2315)).